We begin with the raw amino-acid sequence, 516 residues long: MSRGPEEVNRLTENTYRNVVEQFNPGLRNLINLGKNYEKAVNAMILAGKAYYDGVAKIGEIATGSPVSTELGHVLIEISSTHKKLNETLDENFKKFHKEIIHELEKKTELDVKYMNATLKRYQAEHRNKLDSLEKSQAELKKIRRKSQGGRNALKYEHKEIEYVETVTSRQSEIQKFIADGCKEALLEEKRRFCFLVDKHCSFASHIHRYHLQSAELLNSKLPRWQETCCDATKVPEKIMNMIEEIKTPISTPVSGTPQPSPMTERSKMIGKDYDTLSKYSPKMPPAPSVKAYTSPLIDMFNNPATAGQSAEKTNNSTANTGDDPSLQRSVSVATGLNMMKKQKVKTIFPHTAGNNKTLLSFAQGDVLTLLIPEEKDGWLYGEHDTTKVRGWFPSSYTKLLEENMKEAMSVPTPSSAPVRSISTVDLTEKSSVVIPPPDYLECLSMGATSDKRADAAKIPSTSTFKAPVPRPDATSTSPSDSNGTAKPPFLSGENPFATVKLRPTVTNDRSAPIIR.

Residues 1-249 (MSRGPEEVNR…MNMIEEIKTP (249 aa)) form the IMD domain. Positions 115–148 (MNATLKRYQAEHRNKLDSLEKSQAELKKIRRKSQ) form a coiled coil. Thr-248 and Thr-257 each carry phosphothreonine. Residues Ser-261 and Ser-281 each carry the phosphoserine modification. The tract at residues 303-328 (NPATAGQSAEKTNNSTANTGDDPSLQ) is disordered. The residue at position 332 (Ser-332) is a Phosphoserine. Residues 340-403 (MKKQKVKTIF…PSSYTKLLEE (64 aa)) enclose the SH3 domain. Thr-413 is subject to Phosphothreonine. Ser-415, Ser-421, and Ser-423 each carry phosphoserine. The disordered stretch occupies residues 454 to 516 (ADAAKIPSTS…TNDRSAPIIR (63 aa)). Polar residues predominate over residues 474 to 485 (ATSTSPSDSNGT). A binds F-actin region spans residues 488–516 (PPFLSGENPFATVKLRPTVTNDRSAPIIR).

As to quaternary structure, interacts with RAC1. Binds to F-actin. Interacts with FASLG. In terms of processing, phosphorylated on tyrosine in response to insulin.

The protein localises to the cytoplasm. It is found in the cytoskeleton. Functionally, may function as adapter protein. Involved in the formation of clusters of actin bundles. Plays a role in the reorganization of the actin cytoskeleton in response to bacterial infection. The sequence is that of BAR/IMD domain-containing adapter protein 2-like 1 (Baiap2l1) from Rattus norvegicus (Rat).